The primary structure comprises 1462 residues: DNA polymerase III PolC-type (1462 aa).

Positions 424 to 580 constitute an Exonuclease domain; sequence YVVFDVETTG…YDAEATGRLL (157 aa).

The protein belongs to the DNA polymerase type-C family. PolC subfamily.

The protein resides in the cytoplasm. The enzyme catalyses DNA(n) + a 2'-deoxyribonucleoside 5'-triphosphate = DNA(n+1) + diphosphate. Its function is as follows. Required for replicative DNA synthesis. This DNA polymerase also exhibits 3' to 5' exonuclease activity. This Streptococcus sanguinis (strain SK36) protein is DNA polymerase III PolC-type.